Consider the following 881-residue polypeptide: Putative SWI/SNF-related matrix-associated actin-dependent regulator of chromatin subfamily A member 3-like 1 (881 aa).

The Helicase ATP-binding domain maps to 272-486 (DKRPDPLRGG…YSLMAFLRFE (215 aa)). Residue 285–292 (DDMGLGKT) participates in ATP binding. The interval 308 to 343 (STSTPTEEPLDGEGDKIEKKGKKRGRGKSSESVTRK) is disordered. The DEAH box signature appears at 437–440 (DEAH). An RING-type zinc finger spans residues 635–674 (CPICISPPTNIIITRCAHIFCRACILQTLQRSKPLCPLCR). A disordered region spans residues 681–703 (DLYNAPPPPPDSSNTDGEDAKSS). Residues 711–876 (ALLSLLMASR…EREVNVEDVV (166 aa)) form the Helicase C-terminal domain.

Belongs to the SNF2/RAD54 helicase family. RAD16 subfamily.

Its subcellular location is the nucleus. Possesses intrinsic ATP-dependent nucleosome-remodeling activity. This activity may be required for transcriptional activation or repression of specific target promoters. This Arabidopsis thaliana (Mouse-ear cress) protein is Putative SWI/SNF-related matrix-associated actin-dependent regulator of chromatin subfamily A member 3-like 1.